A 460-amino-acid polypeptide reads, in one-letter code: ESX-1 secretion-associated protein EspB (460 aa).

Disordered regions lie at residues 92-116 (LDND…SAEL), 303-335 (PSDG…PADT), and 405-441 (LGGG…TEDR).

In terms of processing, cleaved in the C-terminal region by MycP1.

Its subcellular location is the secreted. In Mycobacterium tuberculosis (strain CDC 1551 / Oshkosh), this protein is ESX-1 secretion-associated protein EspB.